The sequence spans 161 residues: Nucleotide-binding protein PBPRA2024 (161 aa).

The protein belongs to the YajQ family.

Nucleotide-binding protein. The sequence is that of Nucleotide-binding protein PBPRA2024 from Photobacterium profundum (strain SS9).